The chain runs to 137 residues: Phosphoribosyl-AMP cyclohydrolase (137 aa).

Residue Asp-84 participates in Mg(2+) binding. Zn(2+) is bound at residue Cys-85. 2 residues coordinate Mg(2+): Asp-86 and Asp-88. Zn(2+) contacts are provided by Cys-101 and Cys-108.

Belongs to the PRA-CH family. As to quaternary structure, homodimer. It depends on Mg(2+) as a cofactor. The cofactor is Zn(2+).

The protein localises to the cytoplasm. The enzyme catalyses 1-(5-phospho-beta-D-ribosyl)-5'-AMP + H2O = 1-(5-phospho-beta-D-ribosyl)-5-[(5-phospho-beta-D-ribosylamino)methylideneamino]imidazole-4-carboxamide. Its pathway is amino-acid biosynthesis; L-histidine biosynthesis; L-histidine from 5-phospho-alpha-D-ribose 1-diphosphate: step 3/9. Its function is as follows. Catalyzes the hydrolysis of the adenine ring of phosphoribosyl-AMP. The polypeptide is Phosphoribosyl-AMP cyclohydrolase (Chlorobaculum tepidum (strain ATCC 49652 / DSM 12025 / NBRC 103806 / TLS) (Chlorobium tepidum)).